The chain runs to 399 residues: Cyclic dehypoxanthine futalosine synthase (399 aa).

The 233-residue stretch at 56–288 folds into the Radical SAM core domain; that stretch reads ATYIIERNIN…IAIARVFLDN (233 aa). [4Fe-4S] cluster-binding residues include cysteine 70, cysteine 74, and cysteine 77.

It belongs to the radical SAM superfamily. MqnC family. [4Fe-4S] cluster serves as cofactor.

It catalyses the reaction dehypoxanthine futalosine + S-adenosyl-L-methionine = cyclic dehypoxanthinylfutalosinate + 5'-deoxyadenosine + L-methionine + H(+). Its pathway is quinol/quinone metabolism; menaquinone biosynthesis. Its function is as follows. Radical SAM enzyme that catalyzes the cyclization of dehypoxanthine futalosine (DHFL) into cyclic dehypoxanthine futalosine (CDHFL), a step in the biosynthesis of menaquinone (MK, vitamin K2). The polypeptide is Cyclic dehypoxanthine futalosine synthase (Streptomyces coelicolor (strain ATCC BAA-471 / A3(2) / M145)).